The primary structure comprises 409 residues: Putative competence-damage inducible protein (409 aa).

Belongs to the CinA family.

This Clostridium botulinum (strain Langeland / NCTC 10281 / Type F) protein is Putative competence-damage inducible protein.